Reading from the N-terminus, the 174-residue chain is MNMDWKNLIINIPDYPKAGINFKDITPLLANGAGFKAAIEEMAMICERQNAIPDVLACPEARGFIFAAALAHRLGIGFIPLRKPHKLPREVAHINYGLEYGEDCLEVHKQDIKKGMRIMMVDDVLATGGTMHACMNLLQSLGAEIIGAMFLLELTALKGREKLGTAAVYSLIQD.

It belongs to the purine/pyrimidine phosphoribosyltransferase family. As to quaternary structure, homodimer.

It localises to the cytoplasm. The enzyme catalyses AMP + diphosphate = 5-phospho-alpha-D-ribose 1-diphosphate + adenine. It functions in the pathway purine metabolism; AMP biosynthesis via salvage pathway; AMP from adenine: step 1/1. In terms of biological role, catalyzes a salvage reaction resulting in the formation of AMP, that is energically less costly than de novo synthesis. The protein is Adenine phosphoribosyltransferase of Dichelobacter nodosus (strain VCS1703A).